A 185-amino-acid polypeptide reads, in one-letter code: Ribosome maturation factor RimM (185 aa).

Residues 96-171 enclose the PRC barrel domain; the sequence is EDEFYHSDLL…VITIDPPEDV (76 aa). Residues 165–185 are disordered; sequence IDPPEDVGSKAEEEGGGAPDD.

It belongs to the RimM family. In terms of assembly, binds ribosomal protein uS19.

It is found in the cytoplasm. Its function is as follows. An accessory protein needed during the final step in the assembly of 30S ribosomal subunit, possibly for assembly of the head region. Essential for efficient processing of 16S rRNA. May be needed both before and after RbfA during the maturation of 16S rRNA. It has affinity for free ribosomal 30S subunits but not for 70S ribosomes. This chain is Ribosome maturation factor RimM, found in Maricaulis maris (strain MCS10) (Caulobacter maris).